Here is a 249-residue protein sequence, read N- to C-terminus: Putative NAD(+)--arginine ADP-ribosyltransferase Vis (249 aa).

The N-terminal stretch at 1-18 (MNTRFLLLLCCLSFTTFS) is a signal peptide. The TR mART core domain maps to 31-223 (EEEVTQLAED…IGVETVKASA (193 aa)). Residues 68–80 (SISGYQTANDYLR), 117–120 (RGTW), and glutamate 137 each bind NAD(+). Arginine 117 is a catalytic residue. Residues serine 142 and glutamate 191 contribute to the active site. Glutamate 191 lines the NAD(+) pocket.

The protein belongs to the Arg-specific ADP-ribosyltransferase family.

It is found in the secreted. It carries out the reaction L-arginyl-[protein] + NAD(+) = N(omega)-(ADP-D-ribosyl)-L-arginyl-[protein] + nicotinamide + H(+). Its function is as follows. A probable mono(ADP-ribosyl)transferase, it may ADP-ribosylate Arg in target protein(s). Upon expression in yeast cells causes cell death. This is Putative NAD(+)--arginine ADP-ribosyltransferase Vis from Vibrio splendidus (strain 12B01).